The chain runs to 240 residues: Sugar fermentation stimulation protein homolog (240 aa).

Belongs to the SfsA family.

The chain is Sugar fermentation stimulation protein homolog from Saccharolobus islandicus (strain M.14.25 / Kamchatka #1) (Sulfolobus islandicus).